A 216-amino-acid polypeptide reads, in one-letter code: Uracil phosphoribosyltransferase (216 aa).

5-phospho-alpha-D-ribose 1-diphosphate-binding positions include arginine 85, arginine 110, and 135–143 (DPMVATGYS). Uracil contacts are provided by residues isoleucine 200 and 205-207 (GDA). 5-phospho-alpha-D-ribose 1-diphosphate is bound at residue aspartate 206.

It belongs to the UPRTase family. Mg(2+) serves as cofactor.

It carries out the reaction UMP + diphosphate = 5-phospho-alpha-D-ribose 1-diphosphate + uracil. The protein operates within pyrimidine metabolism; UMP biosynthesis via salvage pathway; UMP from uracil: step 1/1. Allosterically activated by GTP. Catalyzes the conversion of uracil and 5-phospho-alpha-D-ribose 1-diphosphate (PRPP) to UMP and diphosphate. In Burkholderia thailandensis (strain ATCC 700388 / DSM 13276 / CCUG 48851 / CIP 106301 / E264), this protein is Uracil phosphoribosyltransferase.